The following is a 414-amino-acid chain: Phthiocerol/phthiodiolone dimycocerosyl transferase (414 aa).

His118 functions as the Proton acceptor in the catalytic mechanism.

This sequence belongs to the acyltransferase PapA5 family. Monomer. Interacts directly with the acyl carrier protein (ACP) domain of the mycocerosic acid synthase (mas) protein.

The catalysed reaction is 2 a mycocerosyl-[mycocerosic acid synthase] + a phthiocerol = a dimycocerosyl phthiocerol + 2 holo-[mycocerosic acid synthase].. It carries out the reaction 2 a mycocerosyl-[mycocerosic acid synthase] + a phthiodiolone = a dimycocerosyl phthiodiolone + 2 holo-[mycocerosic acid synthase].. It catalyses the reaction 2 a mycocerosyl-[mycocerosic acid synthase] + a phenolphthiocerol = a dimycocerosyl phenolphthiocerol + 2 holo-[mycocerosic acid synthase].. Functionally, catalyzes diesterification of phthiocerol, phthiodiolone, and phenolphthiocerol with mycocerosic acids, the final step in the phthiocerol, phthiodiolone and phenolphthiocerol dimycocerosate esters (PDIM) synthesis. Can directly transfer the mycocerosate bound to the mycocerosic acid synthase (mas) onto the substrate alcohols. The sequence is that of Phthiocerol/phthiodiolone dimycocerosyl transferase (papA5) from Mycobacterium ulcerans (strain Agy99).